An 82-amino-acid chain; its full sequence is Small ribosomal subunit protein bS16 (82 aa).

The protein belongs to the bacterial ribosomal protein bS16 family.

This chain is Small ribosomal subunit protein bS16, found in Saccharophagus degradans (strain 2-40 / ATCC 43961 / DSM 17024).